Consider the following 406-residue polypeptide: MSLLDTLQRGLADLDAQGLRRVRRIADTACDARMIVNRREIVGFASNDYLGLAAHPALVAAFAEGAQRYGAGSGGSHLLGGHSRAHARLEDELAGFAGGFSDAPRALYFSTGYMANLAAMTALAGKGATIFSDALNHASLIDGMRLSRANVQVYPHADTAALAALLDASEAETKLIVSDTVFSMDGDIAPLAELVALAERHGAWLVIDDAHGFGVLGPQGRGALAAAALRSPHLVYVGTLGKAAGVAGAFVIAHETVIEWLIQRARSYIFTTAAPPAVAHAVSASLKVIAGDEGDARRAHLAALIERTRALLRNTRWQPVDSHTAVQPLVIGSNDATLAAMRALDAHGLWVPAIRPPTVPAGTSRLRVSLSAAHSFDDLARLEAALIEASEAAAASVGAARQEAAA.

Substrate is bound at residue arginine 21. Pyridoxal 5'-phosphate is bound at residue 112–113 (GY). Histidine 137 serves as a coordination point for substrate. Residues serine 183, histidine 211, and threonine 239 each coordinate pyridoxal 5'-phosphate. Lysine 242 carries the N6-(pyridoxal phosphate)lysine modification. Threonine 358 is a substrate binding site.

This sequence belongs to the class-II pyridoxal-phosphate-dependent aminotransferase family. BioF subfamily. Homodimer. It depends on pyridoxal 5'-phosphate as a cofactor.

It carries out the reaction 6-carboxyhexanoyl-[ACP] + L-alanine + H(+) = (8S)-8-amino-7-oxononanoate + holo-[ACP] + CO2. It participates in cofactor biosynthesis; biotin biosynthesis. In terms of biological role, catalyzes the decarboxylative condensation of pimeloyl-[acyl-carrier protein] and L-alanine to produce 8-amino-7-oxononanoate (AON), [acyl-carrier protein], and carbon dioxide. This Burkholderia cenocepacia (strain HI2424) protein is 8-amino-7-oxononanoate synthase.